The primary structure comprises 317 residues: Fe-S cluster assembly protein dre2 (317 aa).

Residues 22-152 are N-terminal SAM-like domain; sequence PVQAKRTLLL…KPNFEPSAAV (131 aa). The linker stretch occupies residues 153–209; sequence PLKFGLKKKNKPTPTAVPSIPTGFAAPMGIDSPVTNHDRDEDDELINEDTLLSEEDL. [2Fe-2S] cluster-binding residues include cysteine 219, cysteine 230, cysteine 233, and cysteine 235. Residues 219–235 form a fe-S binding site A region; that stretch reads CQPKTGRRRRACKDCTC. [4Fe-4S] cluster-binding residues include cysteine 280, cysteine 283, cysteine 291, and cysteine 294. 2 short sequence motifs (cx2C motif) span residues 280–283 and 291–294; these read CGSC and CDGC. The fe-S binding site B stretch occupies residues 280–294; that stretch reads CGSCALGDAFRCDGC.

Belongs to the anamorsin family. As to quaternary structure, monomer. Interacts with tah18. Interacts with mia40. [2Fe-2S] cluster is required as a cofactor. It depends on [4Fe-4S] cluster as a cofactor.

Its subcellular location is the cytoplasm. The protein localises to the mitochondrion intermembrane space. Functionally, component of the cytosolic iron-sulfur (Fe-S) protein assembly (CIA) machinery required for the maturation of extramitochondrial Fe-S proteins. Part of an electron transfer chain functioning in an early step of cytosolic Fe-S biogenesis, facilitating the de novo assembly of a [4Fe-4S] cluster on the scaffold complex cfd1-nbp35. Electrons are transferred to dre2 from NADPH via the FAD- and FMN-containing protein tah18. Tah18-dre2 are also required for the assembly of the diferric tyrosyl radical cofactor of ribonucleotide reductase (RNR), probably by providing electrons for reduction during radical cofactor maturation in the catalytic small subunit rnr2. The chain is Fe-S cluster assembly protein dre2 from Penicillium rubens (strain ATCC 28089 / DSM 1075 / NRRL 1951 / Wisconsin 54-1255) (Penicillium chrysogenum).